The following is a 475-amino-acid chain: Ubiquilin-like protein (475 aa).

The Ubiquitin-like domain maps to 31-105 (TRVIVKTAGN…IYLVIKSKQG (75 aa)). 2 disordered regions span residues 113 to 138 (FRDLPTNDPCHRDRNTKGNSSRVHQP) and 305 to 325 (QVQSSPPPPPPSQEQQDQLTQ). A compositionally biased stretch (polar residues) spans 129 to 138 (KGNSSRVHQP).

This Homo sapiens (Human) protein is Ubiquilin-like protein (UBQLNL).